The sequence spans 474 residues: Lipoprotein lipase (474 aa).

The signal sequence occupies residues 1–27 (MESKALLLVALGVWLQSLTAFRGGVAA). The segment at 32–53 (RDFSDIESKFALRTPEDTAEDT) is interaction with GPIHBP1. Cys-54 and Cys-67 are oxidised to a cystine. Asn-70 carries an N-linked (GlcNAc...) asparagine glycan. Tyr-121 is subject to 3'-nitrotyrosine. Ser-159 functions as the Nucleophile in the catalytic mechanism. Residue Asp-183 is the Charge relay system of the active site. At Tyr-191 the chain carries 3'-nitrotyrosine. Residues Ala-194, Arg-197, Ser-199, and Asp-202 each coordinate Ca(2+). Cys-243 and Cys-266 are joined by a disulfide. The interval 243-266 (CNIGEAIRVIAEKGLGDVDQLVKC) is essential for determining substrate specificity. His-268 (charge relay system) is an active-site residue. Disulfide bonds link Cys-291–Cys-310 and Cys-302–Cys-305. Residues 341 to 464 (FHYQVKIHFS…KGKDAAVFVK (124 aa)) enclose the PLAT domain. At Tyr-343 the chain carries 3'-nitrotyrosine. Asn-386 carries an N-linked (GlcNAc...) asparagine glycan. The important for interaction with lipoprotein particles stretch occupies residues 417 to 421 (WSDWW). Residues 430 to 434 (KIRVK) form an important for heparin binding region. Positions 443 to 467 (IFCAREKVSHLQKGKDAAVFVKCHD) are interaction with GPIHBP1. Cys-445 and Cys-465 form a disulfide bridge.

The protein belongs to the AB hydrolase superfamily. Lipase family. In terms of assembly, homodimer. Interacts with GPIHBP1 with 1:1 stoichiometry. Interacts with APOC2; the interaction activates LPL activity in the presence of lipids. Interaction with heparan sulfate proteoglycans is required to protect LPL against loss of activity. Associates with lipoprotein particles in blood plasma. Interacts with LMF1 and SEL1L; interaction with SEL1L is required to prevent aggregation of newly synthesized LPL in the endoplasmic reticulum (ER), and for normal export of LPL from the ER to the extracellular space. Interacts with SORL1; SORL1 acts as a sorting receptor, promoting LPL localization to endosomes and later to lysosomes, leading to degradation of newly synthesized LPL. Tyrosine nitration after lipopolysaccharide (LPS) challenge down-regulates the lipase activity.

The protein resides in the cell membrane. Its subcellular location is the secreted. The protein localises to the extracellular space. It localises to the extracellular matrix. It catalyses the reaction a triacylglycerol + H2O = a diacylglycerol + a fatty acid + H(+). The enzyme catalyses a 1,2-diacyl-sn-glycero-3-phosphocholine + H2O = a 2-acyl-sn-glycero-3-phosphocholine + a fatty acid + H(+). It carries out the reaction 1,2,3-tri-(9Z-octadecenoyl)-glycerol + H2O = di-(9Z)-octadecenoylglycerol + (9Z)-octadecenoate + H(+). The catalysed reaction is 1,2-di-(9Z-octadecenoyl)-sn-glycero-3-phosphocholine + H2O = (9Z-octadecenoyl)-sn-glycero-3-phosphocholine + (9Z)-octadecenoate + H(+). It catalyses the reaction 1,2,3-tributanoylglycerol + H2O = dibutanoylglycerol + butanoate + H(+). The enzyme catalyses 1,2-dihexadecanoyl-sn-glycero-3-phosphocholine + H2O = hexadecanoyl-sn-glycero-3-phosphocholine + hexadecanoate + H(+). The apolipoprotein APOC2 acts as a coactivator of LPL activity. Ca(2+) binding promotes protein stability and formation of the active homodimer. Interaction with GPIHBP1 protects LPL against inactivation by ANGPTL4. Its function is as follows. Key enzyme in triglyceride metabolism. Catalyzes the hydrolysis of triglycerides from circulating chylomicrons and very low density lipoproteins (VLDL), and thereby plays an important role in lipid clearance from the blood stream, lipid utilization and storage. Although it has both phospholipase and triglyceride lipase activities it is primarily a triglyceride lipase with low but detectable phospholipase activity. Mediates margination of triglyceride-rich lipoprotein particles in capillaries. Recruited to its site of action on the luminal surface of vascular endothelium by binding to GPIHBP1 and cell surface heparan sulfate proteoglycans. The polypeptide is Lipoprotein lipase (Lpl) (Rattus norvegicus (Rat)).